The primary structure comprises 441 residues: ATP-dependent protease ATPase subunit HslU (441 aa).

ATP-binding positions include Ile18, 60-65, Asp254, Glu319, and Arg391; that span reads GVGKTE.

The protein belongs to the ClpX chaperone family. HslU subfamily. As to quaternary structure, a double ring-shaped homohexamer of HslV is capped on each side by a ring-shaped HslU homohexamer. The assembly of the HslU/HslV complex is dependent on binding of ATP.

The protein localises to the cytoplasm. In terms of biological role, ATPase subunit of a proteasome-like degradation complex; this subunit has chaperone activity. The binding of ATP and its subsequent hydrolysis by HslU are essential for unfolding of protein substrates subsequently hydrolyzed by HslV. HslU recognizes the N-terminal part of its protein substrates and unfolds these before they are guided to HslV for hydrolysis. This chain is ATP-dependent protease ATPase subunit HslU, found in Shewanella loihica (strain ATCC BAA-1088 / PV-4).